A 284-amino-acid polypeptide reads, in one-letter code: 4-diphosphocytidyl-2-C-methyl-D-erythritol kinase (284 aa).

Residue Lys-13 is part of the active site. 96–106 (PMGGGLGGGSS) is a binding site for ATP. Asp-138 is an active-site residue.

This sequence belongs to the GHMP kinase family. IspE subfamily.

The enzyme catalyses 4-CDP-2-C-methyl-D-erythritol + ATP = 4-CDP-2-C-methyl-D-erythritol 2-phosphate + ADP + H(+). The protein operates within isoprenoid biosynthesis; isopentenyl diphosphate biosynthesis via DXP pathway; isopentenyl diphosphate from 1-deoxy-D-xylulose 5-phosphate: step 3/6. Functionally, catalyzes the phosphorylation of the position 2 hydroxy group of 4-diphosphocytidyl-2C-methyl-D-erythritol. This chain is 4-diphosphocytidyl-2-C-methyl-D-erythritol kinase, found in Chromobacterium violaceum (strain ATCC 12472 / DSM 30191 / JCM 1249 / CCUG 213 / NBRC 12614 / NCIMB 9131 / NCTC 9757 / MK).